The sequence spans 265 residues: MAAAAMALSSPSFAGQAVKLSPSASENSGNGRITMRKAVAKSAPSSSPWXXXXXXXXXXXXXXXXXXXXXXXXXXXXXXXXXXXXXXXXXXXXXXXXXXXXXXXXXXXXXXXXXXXXXXXXXXXXXXXXXXXXXXXXXXXXXXXXXXXXSLVHAQSILAIWACQVVLMGAVEGYRIAGGPLGEVVDPLYPGGSFDPLGLAEDPEAFAELKVKEIKNGRLAMFSMFGFFVQAIVTGKGPLENLADHLADPVNNNAWAFATNFVPGK.

A chloroplast-targeting transit peptide spans M1–T34. The chain crosses the membrane as a helical span at residues L151–V171. Chlorophyll b-binding residues include V152, S156, Q164, E172, R175, and L181. 7 residues coordinate chlorophyll a: K212, E213, N216, R218, Q230, H245, and A254. Residues L219–L239 traverse the membrane as a helical segment. Residue F261 coordinates chlorophyll b.

Belongs to the light-harvesting chlorophyll a/b-binding (LHC) protein family. In terms of assembly, the LHC complex consists of chlorophyll a-b binding proteins. It depends on Binds at least 14 chlorophylls (8 Chl-a and 6 Chl-b) and carotenoids such as lutein and neoxanthin. as a cofactor. Post-translationally, photoregulated by reversible phosphorylation of its threonine residues.

The protein resides in the plastid. It is found in the chloroplast thylakoid membrane. The light-harvesting complex (LHC) functions as a light receptor, it captures and delivers excitation energy to photosystems with which it is closely associated. This chain is Chlorophyll a-b binding protein 1A, chloroplastic (CAB1A), found in Solanum lycopersicum (Tomato).